Consider the following 493-residue polypeptide: Cytochrome P450 2E1 (493 aa).

298–303 (FAGTET) serves as a coordination point for substrate. Residue Cys437 participates in heme binding.

Belongs to the cytochrome P450 family. Interacts with chaperones HSP70 and HSP90; this interaction is required for initial targeting to mitochondria. The cofactor is heme.

Its subcellular location is the endoplasmic reticulum membrane. The protein localises to the microsome membrane. It is found in the mitochondrion inner membrane. It carries out the reaction an organic molecule + reduced [NADPH--hemoprotein reductase] + O2 = an alcohol + oxidized [NADPH--hemoprotein reductase] + H2O + H(+). The catalysed reaction is (5Z,8Z,11Z)-eicosatrienoate + reduced [NADPH--hemoprotein reductase] + O2 = 19-hydroxy-(5Z,8Z,11Z)-eicosatrienoate + oxidized [NADPH--hemoprotein reductase] + H2O + H(+). It catalyses the reaction (5Z,8Z,11Z,14Z,17Z)-eicosapentaenoate + reduced [NADPH--hemoprotein reductase] + O2 = 19-hydroxy-(5Z,8Z,11Z,14Z,17Z)-eicosapentaenoate + oxidized [NADPH--hemoprotein reductase] + H2O + H(+). The enzyme catalyses (4Z,7Z,10Z,13Z,16Z,19Z)-docosahexaenoate + reduced [NADPH--hemoprotein reductase] + O2 = 21-hydroxy-(4Z,7Z,10Z,13Z,16Z,19Z)-docosahexaenoate + oxidized [NADPH--hemoprotein reductase] + H2O + H(+). It carries out the reaction dodecanoate + reduced [NADPH--hemoprotein reductase] + O2 = 11-hydroxydodecanoate + oxidized [NADPH--hemoprotein reductase] + H2O + H(+). The catalysed reaction is tetradecanoate + reduced [NADPH--hemoprotein reductase] + O2 = 13-hydroxytetradecanoate + oxidized [NADPH--hemoprotein reductase] + H2O + H(+). It catalyses the reaction 4-nitrophenol + NADPH + O2 + H(+) = 4-nitrocatechol + NADP(+) + H2O. Its pathway is lipid metabolism; fatty acid metabolism. With respect to regulation, the omega-1 hydroxylase activity is stimulated by cytochrome b5. A cytochrome P450 monooxygenase involved in the metabolism of fatty acids. Mechanistically, uses molecular oxygen inserting one oxygen atom into a substrate, and reducing the second into a water molecule, with two electrons provided by NADPH via cytochrome P450 reductase (NADPH--hemoprotein reductase). Catalyzes the hydroxylation of carbon-hydrogen bonds. Hydroxylates fatty acids specifically at the omega-1 position displaying the highest catalytic activity for saturated fatty acids. May be involved in the oxidative metabolism of xenobiotics. The polypeptide is Cytochrome P450 2E1 (CYP2E1) (Oryctolagus cuniculus (Rabbit)).